Reading from the N-terminus, the 239-residue chain is Sugar fermentation stimulation protein homolog (239 aa).

The protein belongs to the SfsA family.

The polypeptide is Sugar fermentation stimulation protein homolog (Sinorhizobium medicae (strain WSM419) (Ensifer medicae)).